A 485-amino-acid polypeptide reads, in one-letter code: NADH-quinone oxidoreductase subunit N (485 aa).

Transmembrane regions (helical) follow at residues 8–28 (LIAL…MLSI), 35–55 (FLNA…LWFV), 71–91 (GFAM…CTFA), 105–125 (FYLL…ANHL), 127–147 (ALFL…GYAF), 159–179 (YTIL…LVYA), 203–223 (LLAG…LVPF), 235–255 (PAPV…GVVM), 271–291 (VVLG…ALSQ), 297–317 (LLGY…IALQ), 326–346 (VGVY…VVSL), 373–393 (AAVM…LGFI), 408–430 (WWLV…RVAV), and 455–475 (IVVL…QPLI).

The protein belongs to the complex I subunit 2 family. NDH-1 is composed of 13 different subunits. Subunits NuoA, H, J, K, L, M, N constitute the membrane sector of the complex.

It localises to the cell inner membrane. The enzyme catalyses a quinone + NADH + 5 H(+)(in) = a quinol + NAD(+) + 4 H(+)(out). In terms of biological role, NDH-1 shuttles electrons from NADH, via FMN and iron-sulfur (Fe-S) centers, to quinones in the respiratory chain. The immediate electron acceptor for the enzyme in this species is believed to be ubiquinone. Couples the redox reaction to proton translocation (for every two electrons transferred, four hydrogen ions are translocated across the cytoplasmic membrane), and thus conserves the redox energy in a proton gradient. In Salmonella arizonae (strain ATCC BAA-731 / CDC346-86 / RSK2980), this protein is NADH-quinone oxidoreductase subunit N.